A 260-amino-acid polypeptide reads, in one-letter code: 3-oxoadipate CoA-transferase subunit B (260 aa).

Residue E51 is part of the active site.

The protein belongs to the 3-oxoacid CoA-transferase subunit B family. As to quaternary structure, heterotetramer composed of 2 A and 2 B subunits.

It catalyses the reaction 3-oxoadipate + succinyl-CoA = 3-oxoadipyl-CoA + succinate. The protein operates within aromatic compound metabolism; beta-ketoadipate pathway; acetyl-CoA and succinyl-CoA from 3-oxoadipate: step 1/2. The polypeptide is 3-oxoadipate CoA-transferase subunit B (catJ) (Pseudomonas knackmussii (strain DSM 6978 / CCUG 54928 / LMG 23759 / B13)).